Reading from the N-terminus, the 307-residue chain is Coproporphyrin III ferrochelatase (307 aa).

Fe-coproporphyrin III is bound by residues tyrosine 12, arginine 29, 45–46 (RY), serine 53, and tyrosine 124. Fe(2+) is bound by residues histidine 181 and glutamate 263.

Belongs to the ferrochelatase family.

Its subcellular location is the cytoplasm. It carries out the reaction Fe-coproporphyrin III + 2 H(+) = coproporphyrin III + Fe(2+). It participates in porphyrin-containing compound metabolism; protoheme biosynthesis. Involved in coproporphyrin-dependent heme b biosynthesis. Catalyzes the insertion of ferrous iron into coproporphyrin III to form Fe-coproporphyrin III. The sequence is that of Coproporphyrin III ferrochelatase from Staphylococcus epidermidis (strain ATCC 35984 / DSM 28319 / BCRC 17069 / CCUG 31568 / BM 3577 / RP62A).